The sequence spans 523 residues: Glycerate kinase (523 aa).

The residue at position 60 (Ser-60) is a Phosphoserine. N6-acetyllysine is present on Lys-200.

Belongs to the glycerate kinase type-2 family.

It is found in the cytoplasm. It catalyses the reaction (R)-glycerate + ATP = (2R)-3-phosphoglycerate + ADP + H(+). The protein is Glycerate kinase (Glyctk) of Rattus norvegicus (Rat).